Consider the following 146-residue polypeptide: uncharacterized protein (146 aa).

This is an uncharacterized protein from Saccharomyces cerevisiae (strain ATCC 204508 / S288c) (Baker's yeast).